Consider the following 372-residue polypeptide: Probable leucine aminopeptidase MCYG_03459 (372 aa).

The signal sequence occupies residues 1-18; it reads MKISTLAVVSAFAVTAIA. An N-linked (GlcNAc...) asparagine glycan is attached at Asn-95. 2 residues coordinate Zn(2+): His-175 and Asp-194. Asn-195 and Asn-219 each carry an N-linked (GlcNAc...) asparagine glycan. The Zn(2+) site is built by Glu-233 and Asp-260. A disulfide bridge links Cys-305 with Cys-309. His-338 serves as a coordination point for Zn(2+).

This sequence belongs to the peptidase M28 family. M28E subfamily. As to quaternary structure, monomer. Zn(2+) serves as cofactor.

It localises to the secreted. Its function is as follows. Probable extracellular aminopeptidase which contributes to pathogenicity. The polypeptide is Probable leucine aminopeptidase MCYG_03459 (Arthroderma otae (strain ATCC MYA-4605 / CBS 113480) (Microsporum canis)).